Here is a 600-residue protein sequence, read N- to C-terminus: Proton channel OTOP1 (600 aa).

The interval 1–50 (MPGGPGAPSSPAASSGSSRAAPSGIAACPLSPPPLARGSPQASGPRRGAS) is disordered. The Cytoplasmic portion of the chain corresponds to 1–56 (MPGGPGAPSSPAASSGSSRAAPSGIAACPLSPPPLARGSPQASGPRRGASVPQKLA). Positions 7–27 (APSSPAASSGSSRAAPSGIAA) are enriched in low complexity. Residues 57–78 (ETLSSQYGLNVFVAGLLFLLAW) form a helical membrane-spanning segment. Topologically, residues 79–86 (AVHATGVG) are extracellular. The helical transmembrane segment at 87-110 (KSDLLCVLTALMLLQLLWMLWYVG) threads the bilayer. At 111–128 (RSYMQRRLIRPKDTHAGA) the chain is on the cytoplasmic side. The chain crosses the membrane as a helical span at residues 129–151 (RWLRGSITLFAFITVVLGCLKVA). At 152-161 (YFIGFSECLS) the chain is on the extracellular side. A helical membrane pass occupies residues 162–186 (ATEGVFPVTHAVHTLLQVYFLWGHA). Residues 187 to 194 (KDIIMSFK) lie on the Cytoplasmic side of the membrane. The chain crosses the membrane as a helical span at residues 195–217 (TLERFGVIHSVFTNLLLWANSVL). The Extracellular portion of the chain corresponds to 218–262 (NESKHQLNEHKERLITLGFGNITIVLDDHTPQCNCTPPALCSALS). Residues 263 to 288 (HGIYYLYPFNIEYQILASTMLYVLWK) form a helical membrane-spanning segment. The Cytoplasmic segment spans residues 289-309 (NIGRRVDSSQHQKMQCRFDGV). The chain crosses the membrane as a helical span at residues 310-332 (LVGSVLGLTVLAATIAVVVVYMI). The Extracellular portion of the chain corresponds to 333-342 (HIGRSKSKSE). A helical transmembrane segment spans residues 343–368 (SALIMFYLYAITVLLLMGAAGLVGSW). The Cytoplasmic portion of the chain corresponds to 369 to 386 (IYRVDEKSLDESKNPARK). A helical transmembrane segment spans residues 387 to 411 (LDVDLLVATGSGSWLLSWGSILAIA). The Extracellular segment spans residues 412–421 (CAETRPPYTW). Residues 422–442 (YNLPYSVLVIVEKYVQNIFII) traverse the membrane as a helical segment. The Cytoplasmic segment spans residues 443-532 (ESVHLEPEGV…QGGMKRRLLR (90 aa)). The helical transmembrane segment at 533-551 (NITAFLFLCNISLWIPPAF) threads the bilayer. The Extracellular segment spans residues 552 to 569 (GCRPEYDNGLEEIVFGFE). The chain crosses the membrane as a helical span at residues 570–593 (PWIIVVNLAMPFSIFYRMHAAAAL). Topologically, residues 594–600 (FEVYCKI) are cytoplasmic.

This sequence belongs to the otopetrin family. As to quaternary structure, homodimer. Interacts with STAT1, independently of STAT1 phosphorylation status. As to expression, expressed in thymus, heart, kidney, skin, vestibular system of the inner ear, sour taste cells, heart, uterus, dorsal root ganglion, adrenal gland, lactating mammary gland and stimulated mast cells. In the inner ear, expressed in the supporting cells in extrastriolar regions of the saccule and in the utricle, but not in the cochlea. Expressed in brown adipose tissue. Expressed in epididymal white adipose tissue (eWAT), as well as in inguinal fat, in obese animals, but hardly detectable in eWAT from lean mice. Expressed in acid-sensing taste receptor cells (PKD2L1-positive cells), but not in other types of taste cells (at protein level).

It localises to the cell membrane. The protein localises to the cell projection. The protein resides in the microvillus. The enzyme catalyses H(+)(in) = H(+)(out). Activated by both acid and alkali, with proton influx in response to extracellular acid and proton efflux during alkali stimulation. Inhibited by Zn(2+); this inhibition is thought to be pH-sensitive. Currents evoked in response to mild acid (pH 6.0) stimulus may also be mildly potentiated by exposure to Zn(2+). Activated by NH(4)Cl. Proton-selective ion channel. Biphasically modulated by acid and alkali, mediating proton influx and efflux in response to extracellular acid and base stimulation, respectively. Sour taste receptor, which carries inward currents in response to extracellular acidification. Sensor for ammonium chloride (NH(4)Cl) in taste receptor cells. NH(4)Cl acts by increasing the intracellular pH, thereby generating a driving force for proton entry through OTOP1 channel. Might also participate in alkaline sensation. Plays a role in the regulation of Ca(2+) flux in response to purigenic (ATP, ADP and UDP) stimuli, leading to increase in cytosolic Ca(2+) due to influx of extracellular calcium. May play this role by inhibiting P2Y purinoceptor-mediated Ca(2+) release in a Ca(2+)-dependent manner and promote an influx of Ca(2+) in response to ATP. Through this mechanism and possibly others, plays a role in the formation and function of calcium carbonate-based structures in the vestibular system of the inner ear, called otoconia, that sense gravity and linear acceleration. In obesity, may attenuate adipose tissue inflammation, through the negative regulation of IFNG signaling, hence may play an adaptive role in the maintainance of metabolic homeostasis. Following alkali activation, may also be permeable Na(+), K(+), Cs(+) and Li(+). In Mus musculus (Mouse), this protein is Proton channel OTOP1.